Consider the following 661-residue polypeptide: ADCQAGDSADKLLAQKQHDVNYLVYKLYGDIRDDHLKELGETFNPQGDLLLYHDNGASVNTLMADFKDGRLLQKKHWFSLFNTRQREEALMMHRVLMNCKNWHAFVSNAAYFRTNMNEGEYLYALYVSLIHSGLGEGVVLPPLYEVTPHMFTNSEVIHEAYKAQMTNTPSKFESHFTGSKKNPEQHVAYFGEDVGMNTHHVLWHMEFPFWWEDSSGRHLDRKGESFFWVHHQLTVRYDAERLSNHLDPVEELSWNKAIDEGFAPHTAYKYGGYFPSRPDNVHFSDVDGVARVRDMSMTEDRIRDAIAHGYIDALDGSHIDIMNSHGIEFLGDIIESSGYSANPGFYGSLHNTAHIMLGRQGDPTGKFDLPPGVLEHFETSTRDPSFFRLHKYMDNIFREHKDSLTPYTRDELEFNGVSIDSIAIEGTLETFFENFEYSLLNAVDDTVDIADVEILTYIERLNHKKFSFLILVTNNNNTEVLATVRIFAWPLRDNNGIEYSFNEGRWRALELDRFWVKVKHGHHQITRQSTESSVTVPDVPSLQTLIDRADAAISSGCALHLEDYESALGLPNRFLLPKGQAQGMEFNLVVAVTDGRTDAALDDLHENTKFIHYGYDRQYPDKRPHGYPLDRRVDDERIFEALPNFKQRTVKLYSHEGVDGG.

Cys3 and Cys557 are oxidised to a cystine. 6 residues coordinate Cu cation: His200, His204, His230, His350, His354, and His390. A glycan (N-linked (GlcNAc...) asparagine) is linked at Asn476.

This sequence belongs to the tyrosinase family. Hemocyanin subfamily. In terms of assembly, hexamer of a number of different chains, of which A, B, and C have been identified. As to expression, hemolymph.

The protein resides in the secreted. The protein localises to the extracellular space. Its function is as follows. Hemocyanins are copper-containing oxygen carriers occurring freely dissolved in the hemolymph of many mollusks and arthropods. In Panulirus interruptus (California spiny lobster), this protein is Hemocyanin C chain.